The sequence spans 436 residues: GTPase Der (436 aa).

2 consecutive EngA-type G domains span residues 4–167 and 175–351; these read PVIA…PTDL and IKFS…ENQN. Residues 10 to 17, 57 to 61, 119 to 122, 181 to 188, 229 to 233, and 294 to 297 contribute to the GTP site; these read GRPNVGKS, DTGGI, NKAD, DTAGI, and NKWD. Residues 352–436 form the KH-like domain; the sequence is RRIQSALLND…PIHLIPRQRK (85 aa).

This sequence belongs to the TRAFAC class TrmE-Era-EngA-EngB-Septin-like GTPase superfamily. EngA (Der) GTPase family. In terms of assembly, associates with the 50S ribosomal subunit.

In terms of biological role, GTPase that plays an essential role in the late steps of ribosome biogenesis. This Latilactobacillus sakei subsp. sakei (strain 23K) (Lactobacillus sakei subsp. sakei) protein is GTPase Der.